We begin with the raw amino-acid sequence, 127 residues long: Cliotide T3 (127 aa).

The first 24 residues, methionine 1–glycine 24, serve as a signal peptide directing secretion. The cyclopeptide (Gly-Asn) cross-link spans glycine 25–asparagine 53. 3 cysteine pairs are disulfide-bonded: cysteine 29–cysteine 43, cysteine 33–cysteine 45, and cysteine 38–cysteine 50. Residues histidine 54 to asparagine 127 constitute a propeptide, removed in mature form.

Contains 3 disulfide bonds. In terms of processing, this is a cyclic peptide. As to expression, expressed in flower, stem, shoot, leaf and seed but not in root, pod and nodule (at protein level).

Probably participates in a plant defense mechanism. Not active against Gram-negative bacteria E.coli ATCC 700926, K.pneumoniae ATTC 13883 and P.aeruginosa ATCC 39018 at concentration up to 100 uM. Has cytotoxic and hemolytic activity. This is Cliotide T3 from Clitoria ternatea (Butterfly pea).